The primary structure comprises 301 residues: Acetylglutamate kinase (301 aa).

Substrate-binding positions include 68 to 69 (GG), Arg90, and Asn195.

The protein belongs to the acetylglutamate kinase family. ArgB subfamily.

The protein resides in the cytoplasm. It carries out the reaction N-acetyl-L-glutamate + ATP = N-acetyl-L-glutamyl 5-phosphate + ADP. It participates in amino-acid biosynthesis; L-arginine biosynthesis; N(2)-acetyl-L-ornithine from L-glutamate: step 2/4. Its function is as follows. Catalyzes the ATP-dependent phosphorylation of N-acetyl-L-glutamate. This Pseudomonas savastanoi pv. phaseolicola (strain 1448A / Race 6) (Pseudomonas syringae pv. phaseolicola (strain 1448A / Race 6)) protein is Acetylglutamate kinase.